A 316-amino-acid chain; its full sequence is Methionyl-tRNA formyltransferase (316 aa).

A (6S)-5,6,7,8-tetrahydrofolate-binding site is contributed by G111 to P114.

The protein belongs to the Fmt family.

The enzyme catalyses L-methionyl-tRNA(fMet) + (6R)-10-formyltetrahydrofolate = N-formyl-L-methionyl-tRNA(fMet) + (6S)-5,6,7,8-tetrahydrofolate + H(+). In terms of biological role, attaches a formyl group to the free amino group of methionyl-tRNA(fMet). The formyl group appears to play a dual role in the initiator identity of N-formylmethionyl-tRNA by promoting its recognition by IF2 and preventing the misappropriation of this tRNA by the elongation apparatus. This chain is Methionyl-tRNA formyltransferase, found in Chlamydia trachomatis serovar A (strain ATCC VR-571B / DSM 19440 / HAR-13).